A 66-amino-acid chain; its full sequence is Large ribosomal subunit protein bL35 (66 aa).

This sequence belongs to the bacterial ribosomal protein bL35 family.

The protein is Large ribosomal subunit protein bL35 of Caulobacter vibrioides (strain ATCC 19089 / CIP 103742 / CB 15) (Caulobacter crescentus).